Here is a 560-residue protein sequence, read N- to C-terminus: MSKDIKSVEHSPKIHQRNDPQHVNDRTFFIDASNQSLTAIPLEIFTFTELEEVHLENNQIEEIPQEIQRLKNIRVLYLDKNNLRSLCPALGLLSSLESLDLSYNPIFSSSLVVVSFLHALRELRLYQTDLKEIPVVIFKNLHHLELLGLTGNHLKCLPKEIVNQTKLREIYLKRNQFEVFPQELCVLYTLEIIDLDENKIGAIPEEIGHLTGLQKFYMASNNLPVLPASLCQCSQLSVLDLSHNLLHSIPKSFAELRKMTEIGLSGNRLEKVPRLICRWTSLHLLYLGNTGLHRLRGSFRCLVNLRFLDLSQNHLHHCPLQICALKNLEVLGLDDNKIGQLPSELGSLSKLKILGLTGNEFLSFPEEVLSLASLEKLYIGQDQGFKLTYVPEHIRKLQSLKELYIENNHLEYLPVSLGSMPNLEVLDCRHNLLKQLPDAICQAQALKELRLEDNLLTHLPENLDSLVNLKVLTLMDNPMEEPPKEVCAEGNEAIWKYLKENRNRNIMATKIQAWWRGTMVQRGFGKFGELLKPQKKGKTSPKDKKGKKDVKGKPGKGKKK.

The tract at residues 1-20 (MSKDIKSVEHSPKIHQRNDP) is disordered. 20 LRR repeats span residues 23–47 (VNDRTFFIDASNQSLTAIPLEIFTF), 48–70 (TELEEVHLENNQIEEIPQEIQRL), 72–95 (NIRVLYLDKNNLRSLCPALGLLSS), 97–116 (ESLDLSYNPIFSSSLVVVSF), 117–140 (LHALRELRLYQTDLKEIPVVIFKN), 141–164 (LHHLELLGLTGNHLKCLPKEIVNQ), 166–187 (KLREIYLKRNQFEVFPQELCVL), 188–210 (YTLEIIDLDENKIGAIPEEIGHL), 212–233 (GLQKFYMASNNLPVLPASLCQC), 234–256 (SQLSVLDLSHNLLHSIPKSFAEL), 258–281 (KMTEIGLSGNRLEKVPRLICRWTS), 283–301 (HLLYLGNTGLHRLRGSFRC), 302–325 (LVNLRFLDLSQNHLHHCPLQICAL), 326–348 (KNLEVLGLDDNKIGQLPSELGSL), 350–371 (KLKILGLTGNEFLSFPEEVLSL), 374–397 (LEKLYIGQDQGFKLTYVPEHIRKL), 398–422 (QSLKELYIENNHLEYLPVSLGSMPN), 424–443 (EVLDCRHNLLKQLPDAICQA), 444–466 (QALKELRLEDNLLTHLPENLDSL), and 468–489 (NLKVLTLMDNPMEEPPKEVCAE). The IQ domain maps to 504 to 533 (RNIMATKIQAWWRGTMVQRGFGKFGELLKP). The interval 529 to 560 (ELLKPQKKGKTSPKDKKGKKDVKGKPGKGKKK) is disordered. A compositionally biased stretch (basic residues) spans 533 to 560 (PQKKGKTSPKDKKGKKDVKGKPGKGKKK).

The sequence is that of Leucine-rich repeat and IQ domain-containing protein 4 (LRRIQ4) from Homo sapiens (Human).